The primary structure comprises 1193 residues: Kinesin-related protein 3 (1193 aa).

The Kinesin motor domain occupies 3–329; the sequence is SIRVVCRFRP…LRFGSRAKNI (327 aa). Residue 85–92 coordinates ATP; the sequence is GQTGSGKT. Disordered regions lie at residues 377-429, 573-600, 611-630, 638-665, 973-1016, 1032-1114, and 1127-1193; these read KSSG…SSNV, SSIASLVPSTPKSSAEMDPLATASKHAD, LLQRTPSKAVGSSKSNTATS, ISESDNIGSGATTTTNNNNATITPATSS, GGGG…SANL, KAEP…PVKI, and FKKK…QQKD. Low complexity predominate over residues 405–429; it reads SSNLSNSVNSTSNLNTSSNTSSSNV. A coiled-coil region spans residues 450-962; that stretch reads ELIKVLQEKC…SQVGVDAQNT (513 aa). 2 stretches are compositionally biased toward polar residues: residues 573–585 and 614–630; these read SSIASLVPSTPKS and RTPSKAVGSSKSNTATS. Composition is skewed to low complexity over residues 643–665 and 985–1006; these read NIGSGATTTTNNNNATITPATSS and HSSSSSTSSSSALNHSSINNNH. Residues 1007–1016 are compositionally biased toward polar residues; it reads TTPTPLSANL. Composition is skewed to low complexity over residues 1044–1078, 1086–1109, and 1132–1149; these read NTSIPSSPNHTSSNNINNNSNNNNNNNNNNNIGNS, NNNSSISNSNNNSSSNLNANLNGN, and PSSTPPSSTNNLSPQSPQ. 2 stretches are compositionally biased toward polar residues: residues 1150–1165 and 1174–1193; these read TPSHLSADGSGNISPN and FSYTPAVVTSSTINKDQQKD.

This sequence belongs to the TRAFAC class myosin-kinesin ATPase superfamily. Kinesin family. Kinesin subfamily. As to quaternary structure, dimer.

It is found in the cytoplasm. It localises to the cytoskeleton. In terms of biological role, microtubule-associated force-producing protein that plays a role in organelle transport. Its motor activity is directed toward the microtubule's plus end. The maximal velocity in an inverted motility assay (moving microtubules on fixed motors) was 1.96 um/s. The protein is Kinesin-related protein 3 (kif3) of Dictyostelium discoideum (Social amoeba).